The primary structure comprises 173 residues: NADH-ubiquinone oxidoreductase chain 6 (173 aa).

5 helical membrane passes run methionine 1–serine 21, tyrosine 27–glycine 47, methionine 48–valine 68, valine 87–leucine 107, and cysteine 139–leucine 159.

The protein belongs to the complex I subunit 6 family.

It is found in the mitochondrion membrane. The enzyme catalyses a ubiquinone + NADH + 5 H(+)(in) = a ubiquinol + NAD(+) + 4 H(+)(out). Its function is as follows. Core subunit of the mitochondrial membrane respiratory chain NADH dehydrogenase (Complex I) that is believed to belong to the minimal assembly required for catalysis. Complex I functions in the transfer of electrons from NADH to the respiratory chain. The immediate electron acceptor for the enzyme is believed to be ubiquinone. This is NADH-ubiquinone oxidoreductase chain 6 (MT-ND6) from Synthliboramphus antiquus (Ancient murrelet).